The primary structure comprises 376 residues: Cytochrome b (376 aa).

4 helical membrane passes run 28-48 (YGFL…FLAS), 72-94 (WCFR…LHIL), 107-127 (SWIS…IGYV), and 169-189 (FFVL…IHIF). 2 residues coordinate heme b: His78 and His92. Residues His173 and His187 each coordinate heme b. His192 is a binding site for a ubiquinone. Helical transmembrane passes span 214-234 (LLSL…IQSI), 274-294 (IPSK…LFLL), 317-337 (VPII…CPLP), and 340-360 (IFIL…LFSL).

The protein belongs to the cytochrome b family. In terms of assembly, the main subunits of complex b-c1 are: cytochrome b, cytochrome c1 and the Rieske protein. Requires heme b as cofactor.

Its subcellular location is the mitochondrion inner membrane. In terms of biological role, component of the ubiquinol-cytochrome c reductase complex (complex III or cytochrome b-c1 complex) that is part of the mitochondrial respiratory chain. The b-c1 complex mediates electron transfer from ubiquinol to cytochrome c. Contributes to the generation of a proton gradient across the mitochondrial membrane that is then used for ATP synthesis. The chain is Cytochrome b (MT-CYB) from Plasmodium berghei.